Consider the following 377-residue polypeptide: Nitric oxide reductase FlRd-NAD(+) reductase (377 aa).

The protein belongs to the FAD-dependent oxidoreductase family. FAD serves as cofactor.

The protein localises to the cytoplasm. It carries out the reaction 2 reduced [nitric oxide reductase rubredoxin domain] + NAD(+) + H(+) = 2 oxidized [nitric oxide reductase rubredoxin domain] + NADH. It functions in the pathway nitrogen metabolism; nitric oxide reduction. Its function is as follows. One of at least two accessory proteins for anaerobic nitric oxide (NO) reductase. Reduces the rubredoxin moiety of NO reductase. This chain is Nitric oxide reductase FlRd-NAD(+) reductase (norW), found in Shigella boydii serotype 4 (strain Sb227).